The chain runs to 458 residues: Cysteine--tRNA ligase (458 aa).

Cys28 contacts Zn(2+). The 'HIGH' region motif lies at 30–40 (VTVYDLCHFGH). Zn(2+) contacts are provided by Cys209, His234, and Glu238. The 'KMSKS' region signature appears at 266 to 270 (KMSKS). An ATP-binding site is contributed by Lys269.

It belongs to the class-I aminoacyl-tRNA synthetase family. As to quaternary structure, monomer. Zn(2+) serves as cofactor.

The protein localises to the cytoplasm. The catalysed reaction is tRNA(Cys) + L-cysteine + ATP = L-cysteinyl-tRNA(Cys) + AMP + diphosphate. The sequence is that of Cysteine--tRNA ligase from Mannheimia succiniciproducens (strain KCTC 0769BP / MBEL55E).